The following is a 519-amino-acid chain: Cytochrome P450 52E2 (519 aa).

2 helical membrane passes run 10–30 (MLGG…FYFI) and 44–64 (PIFF…NAWF). Cysteine 461 contributes to the heme binding site.

It belongs to the cytochrome P450 family. The cofactor is heme.

It localises to the membrane. Functionally, together with an NADPH cytochrome P450 the enzyme system catalyzes the terminal hydroxylation as the first step in the assimilation of alkanes and fatty acids. The sequence is that of Cytochrome P450 52E2 (CYP52E2) from Candida apicola (Yeast).